Reading from the N-terminus, the 311-residue chain is Glycine--tRNA ligase alpha subunit (311 aa).

It belongs to the class-II aminoacyl-tRNA synthetase family. In terms of assembly, tetramer of two alpha and two beta subunits.

The protein resides in the cytoplasm. It catalyses the reaction tRNA(Gly) + glycine + ATP = glycyl-tRNA(Gly) + AMP + diphosphate. The polypeptide is Glycine--tRNA ligase alpha subunit (Bradyrhizobium diazoefficiens (strain JCM 10833 / BCRC 13528 / IAM 13628 / NBRC 14792 / USDA 110)).